Here is a 98-residue protein sequence, read N- to C-terminus: Protein S100-A13 (98 aa).

In terms of domain architecture, EF-hand spans 18–53 (TTFFTFARQEGRKDSLSVNEFKELVTQQLPHLLKDV). Ser-32, Glu-37, Asp-64, Asn-66, Asp-68, Glu-70, and Glu-75 together coordinate Ca(2+). Ser-32 is modified (phosphoserine).

This sequence belongs to the S-100 family. Homodimer. Part of a copper-dependent multiprotein complex containing S100A13, FGF1 and SYT1. Interacts with FGF1 and SYT1. Interacts with IL1A. In terms of tissue distribution, expressed in heart and skeletal muscle.

It is found in the cytoplasm. Its subcellular location is the secreted. In terms of biological role, plays a role in the export of proteins that lack a signal peptide and are secreted by an alternative pathway. Binds two calcium ions per subunit. Binds one copper ion. Binding of one copper ion does not interfere with calcium binding. Required for the copper-dependent stress-induced export of IL1A and FGF1. The calcium-free protein binds to lipid vesicles containing phosphatidylserine, but not to vesicles containing phosphatidylcholine. This Homo sapiens (Human) protein is Protein S100-A13 (S100A13).